A 269-amino-acid polypeptide reads, in one-letter code: Hydroxyethylthiazole kinase (269 aa).

Met-45 provides a ligand contact to substrate. ATP contacts are provided by Arg-121 and Thr-167. Gly-194 serves as a coordination point for substrate.

Belongs to the Thz kinase family. It depends on Mg(2+) as a cofactor.

The catalysed reaction is 5-(2-hydroxyethyl)-4-methylthiazole + ATP = 4-methyl-5-(2-phosphooxyethyl)-thiazole + ADP + H(+). It functions in the pathway cofactor biosynthesis; thiamine diphosphate biosynthesis; 4-methyl-5-(2-phosphoethyl)-thiazole from 5-(2-hydroxyethyl)-4-methylthiazole: step 1/1. Functionally, catalyzes the phosphorylation of the hydroxyl group of 4-methyl-5-beta-hydroxyethylthiazole (THZ). The polypeptide is Hydroxyethylthiazole kinase (Bacillus cytotoxicus (strain DSM 22905 / CIP 110041 / 391-98 / NVH 391-98)).